The chain runs to 438 residues: Putative permease HI_0125 (438 aa).

The next 13 membrane-spanning stretches (helical) occupy residues 21–41 (IIAGLTTFLAMVYSVIVVPNM), 51–71 (SVFIATCLVAGLGSILIGLWA), 73–93 (APMAIGCAISLTAFTAFSLVI), 97–117 (VAIPVALGAVFLMGVVFTLIS), 137–157 (AGIGIGLFLLLIAANGVGLVV), 167–187 (LGDFTSFPVMMSLIGLALIIG), 195–215 (GGILWVIIAITIVGLIFDPNV), 238–258 (FMGALQPAILPVVFALVMTAV), 296–316 (LFSGLFGTAPAAVYIESAAGT), 326–346 (AIVVGVLFLLMLFFQPLAFLV), 347–367 (PGYATAPALMYVGLLMLSNVS), 386–406 (FIVLTANIVTGIMLGFAALVI), and 418–438 (NVGTVIIAIVLVAFYAGGWAI). 315–322 (GTAAGGKT) provides a ligand contact to ATP.

The protein belongs to the nucleobase:cation symporter-2 (NCS2) (TC 2.A.40) family. Azg-like subfamily.

The protein resides in the cell membrane. This is Putative permease HI_0125 from Haemophilus influenzae (strain ATCC 51907 / DSM 11121 / KW20 / Rd).